The chain runs to 369 residues: Thyroid hormone receptor beta (369 aa).

Residues M1–L14 form a modulating region. 8 residues coordinate Zn(2+): C15, C18, C32, C35, C53, C59, C69, and C72. 2 NR C4-type zinc fingers span residues C15–C35 and C53–C77. The nuclear receptor DNA-binding region spans C15 to D89. The NR LBD domain occupies E125–D369. Residues R190, N239, and H343 each contribute to the 3,3',5-triiodo-L-thyronine site. The L-thyroxine site is built by R190, N239, and H343.

Belongs to the nuclear hormone receptor family. NR1 subfamily.

Its subcellular location is the nucleus. Nuclear hormone receptor that can act as a repressor or activator of transcription. High affinity receptor for thyroid hormones, including triiodothyronine and thyroxine. The sequence is that of Thyroid hormone receptor beta (THRB) from Cairina moschata (Muscovy duck).